The primary structure comprises 499 residues: GTPase Der (499 aa).

EngA-type G domains are found at residues 3–166 (PVVA…LETL) and 213–386 (IKFA…QSAT). Residues 9 to 16 (GRPNVGKS), 56 to 60 (DTGGI), 118 to 121 (NKTD), 219 to 226 (GRPNVGKS), 266 to 270 (DTAGV), and 331 to 334 (NKWD) contribute to the GTP site. One can recognise a KH-like domain in the interval 387-471 (RRTSTAMLTR…PIRVEFQESA (85 aa)). The disordered stretch occupies residues 476–499 (GRKNTMTLSQERQRKRLLKAKTKK). The span at 488 to 499 (QRKRLLKAKTKK) shows a compositional bias: basic residues.

The protein belongs to the TRAFAC class TrmE-Era-EngA-EngB-Septin-like GTPase superfamily. EngA (Der) GTPase family. In terms of assembly, associates with the 50S ribosomal subunit.

In terms of biological role, GTPase that plays an essential role in the late steps of ribosome biogenesis. This is GTPase Der from Aeromonas salmonicida (strain A449).